The following is a 457-amino-acid chain: Cyclic dof factor 2 (457 aa).

The disordered stretch occupies residues Met-1 to Lys-130. Residues Asp-22 to Gln-35 show a composition bias toward polar residues. Acidic residues-rich tracts occupy residues Thr-45–Gly-54 and Glu-62–Ser-73. 2 stretches are compositionally biased toward basic and acidic residues: residues Glu-74 to Ser-94 and Glu-106 to Glu-118. The Dof-type zinc finger occupies Leu-138–Ser-192. Zn(2+)-binding residues include Cys-140, Cys-143, Cys-165, and Cys-168. 2 disordered regions span residues Gln-334 to Pro-377 and Ala-417 to Ser-457. Positions Ser-337–Pro-346 are enriched in low complexity.

As to quaternary structure, interacts with ADO2 (via kelch repeats) and ADO3 (via kelch repeats). Expressed in the vasculature of cotyledons and hypocotyls, leaves and roots.

It is found in the nucleus. Its function is as follows. Transcription factor that binds specifically to a 5'-AA[AG]G-3' consensus core sequence. Regulates a photoperiodic flowering response. Transcriptional repressor of 'CONSTANS' expression. The stability of CDF2 is controlled by 'GIGANTEA' and redundantly by ADO3, ADO2 and/or ADO1. This Arabidopsis thaliana (Mouse-ear cress) protein is Cyclic dof factor 2 (CDF2).